An 87-amino-acid chain; its full sequence is Small ribosomal subunit protein bS20 (87 aa).

The protein belongs to the bacterial ribosomal protein bS20 family.

In terms of biological role, binds directly to 16S ribosomal RNA. The polypeptide is Small ribosomal subunit protein bS20 (Rhizorhabdus wittichii (strain DSM 6014 / CCUG 31198 / JCM 15750 / NBRC 105917 / EY 4224 / RW1) (Sphingomonas wittichii)).